Reading from the N-terminus, the 548-residue chain is CTP synthase (548 aa).

The interval 1–265 is amidoligase domain; it reads MTRYIFVTGG…DDIICDKLRI (265 aa). Residue Ser-13 coordinates CTP. Ser-13 is a UTP binding site. ATP-binding positions include 14 to 19 and Asp-71; that span reads SLGKGI. The Mg(2+) site is built by Asp-71 and Glu-139. CTP is bound by residues 146 to 148, 186 to 191, and Lys-222; these read DIE and KTKPTQ. UTP contacts are provided by residues 186-191 and Lys-222; that span reads KTKPTQ. In terms of domain architecture, Glutamine amidotransferase type-1 spans 290 to 541; the sequence is NIAMVGKYME…VNAALAYKAA (252 aa). Position 351 (Gly-351) interacts with L-glutamine. The active-site Nucleophile; for glutamine hydrolysis is Cys-378. Residues 379-382, Glu-402, and Arg-469 contribute to the L-glutamine site; that span reads LGMQ. Active-site residues include His-514 and Glu-516.

The protein belongs to the CTP synthase family. Homotetramer.

The catalysed reaction is UTP + L-glutamine + ATP + H2O = CTP + L-glutamate + ADP + phosphate + 2 H(+). It carries out the reaction L-glutamine + H2O = L-glutamate + NH4(+). It catalyses the reaction UTP + NH4(+) + ATP = CTP + ADP + phosphate + 2 H(+). It functions in the pathway pyrimidine metabolism; CTP biosynthesis via de novo pathway; CTP from UDP: step 2/2. Allosterically activated by GTP, when glutamine is the substrate; GTP has no effect on the reaction when ammonia is the substrate. The allosteric effector GTP functions by stabilizing the protein conformation that binds the tetrahedral intermediate(s) formed during glutamine hydrolysis. Inhibited by the product CTP, via allosteric rather than competitive inhibition. Functionally, catalyzes the ATP-dependent amination of UTP to CTP with either L-glutamine or ammonia as the source of nitrogen. Regulates intracellular CTP levels through interactions with the four ribonucleotide triphosphates. This is CTP synthase from Chromohalobacter salexigens (strain ATCC BAA-138 / DSM 3043 / CIP 106854 / NCIMB 13768 / 1H11).